We begin with the raw amino-acid sequence, 111 residues long: Putative membrane protein insertion efficiency factor (111 aa).

Belongs to the UPF0161 family.

Its subcellular location is the cell inner membrane. Could be involved in insertion of integral membrane proteins into the membrane. In Methylobacterium nodulans (strain LMG 21967 / CNCM I-2342 / ORS 2060), this protein is Putative membrane protein insertion efficiency factor.